Reading from the N-terminus, the 156-residue chain is Small ribosomal subunit protein uS7 (156 aa).

It belongs to the universal ribosomal protein uS7 family. Part of the 30S ribosomal subunit. Contacts proteins S9 and S11.

Functionally, one of the primary rRNA binding proteins, it binds directly to 16S rRNA where it nucleates assembly of the head domain of the 30S subunit. Is located at the subunit interface close to the decoding center, probably blocks exit of the E-site tRNA. This chain is Small ribosomal subunit protein uS7, found in Natranaerobius thermophilus (strain ATCC BAA-1301 / DSM 18059 / JW/NM-WN-LF).